Here is a 640-residue protein sequence, read N- to C-terminus: Acid beta-fructofuranosidase 2, vacuolar (640 aa).

Residues 1–22 are disordered; the sequence is MDTNTTSYTPLPGDPFLSGPPE. At 1-29 the chain is on the cytoplasmic side; sequence MDTNTTSYTPLPGDPFLSGPPETPRRPLK. The propeptide at 1–78 is removed in mature form; the sequence is MDTNTTSYTP…HPQSTTNTML (78 aa). A helical membrane pass occupies residues 30–49; sequence GFAVIFASVIFLMSLVALII. At 50–616 the chain is on the lumenal side; the sequence is HQGPQQPPDV…FSPDAASHSS (567 aa). Substrate is bound by residues 93 to 96, Gln-112, Trp-120, 155 to 156, 219 to 220, Glu-274, and Asp-307; these read WMND, WT, and RD. Asp-96 is a catalytic residue. Cysteines 464 and 512 form a disulfide. Residues 617–639 traverse the membrane as a helical segment; sequence FTPVTVFIKFIVPFGIFLTLYFV. A topological domain (cytoplasmic) is located at residue Arg-640.

The protein belongs to the glycosyl hydrolase 32 family. In terms of tissue distribution, expressed in buds, stems, roots and leaves.

Its subcellular location is the membrane. The protein resides in the vacuole membrane. It catalyses the reaction Hydrolysis of terminal non-reducing beta-D-fructofuranoside residues in beta-D-fructofuranosides.. Its function is as follows. Vacuolar invertase. The sequence is that of Acid beta-fructofuranosidase 2, vacuolar from Rosa hybrid cultivar.